A 1984-amino-acid chain; its full sequence is Vitellogenin receptor Yl (1984 aa).

Residues 1-19 (MCQAEHQVHPSEQRIRVES) show a composition bias toward basic and acidic residues. The interval 1–48 (MCQAEHQVHPSEQRIRVESPKMTASRRGFNLTSQTRAHPSSGGSTSSR) is disordered. An N-linked (GlcNAc...) asparagine glycan is attached at Asn-30. Residues 30-48 (NLTSQTRAHPSSGGSTSSR) are compositionally biased toward polar residues. LDL-receptor class A domains are found at residues 89–125 (RCDA…LDCD), 128–167 (LCRP…LNCP), 183–221 (SCSK…AGCK), 226–263 (TCPG…RGCL), and 265–305 (LCEP…DLCH). 20 disulfides stabilise this stretch: Cys-90/Cys-102, Cys-97/Cys-115, Cys-109/Cys-124, Cys-129/Cys-144, Cys-137/Cys-157, Cys-151/Cys-166, Cys-184/Cys-197, Cys-191/Cys-210, Cys-204/Cys-220, Cys-227/Cys-239, Cys-234/Cys-253, Cys-247/Cys-262, Cys-266/Cys-281, Cys-275/Cys-294, Cys-288/Cys-304, Cys-310/Cys-321, Cys-315/Cys-331, Cys-352/Cys-363, Cys-359/Cys-372, and Cys-374/Cys-387. In terms of domain architecture, EGF-like 1 spans 306–343 (SKPDCDAKKCALGAKCHMMPASGAECFCPKGFRLAKFE). In terms of domain architecture, EGF-like 2; calcium-binding spans 348-388 (DVDECKEQDDLCSQGCENTSGGYRCVCDAGYLLDKDNRTCR). Residues Asn-365, Asn-384, and Asn-429 are each glycosylated (N-linked (GlcNAc...) asparagine). 4 LDL-receptor class B repeats span residues 441 to 485 (SHIY…DWLT), 486 to 528 (QNIY…WPQK), 529 to 572 (GLMF…DMHQ), and 573 to 615 (QRIY…FEDQ). N-linked (GlcNAc...) asparagine glycans are attached at residues Asn-666, Asn-749, and Asn-782. 4 LDL-receptor class B repeats span residues 750–792 (GSLI…DHLS), 793–836 (RNLY…MPAE), 884–925 (QTIF…VHHD), and 934–940 (PRIYWTH). An N-linked (GlcNAc...) asparagine glycan is attached at Asn-1022. LDL-receptor class A domains lie at 1024-1063 (TCVE…MNCD), 1073-1110 (LCSP…QHCE), 1117-1153 (KCHV…LLCE), 1157-1194 (RCEP…DKCV), and 1197-1233 (SCPP…LNCG). Intrachain disulfides connect Cys-1025/Cys-1040, Cys-1035/Cys-1053, Cys-1047/Cys-1062, Cys-1074/Cys-1087, Cys-1081/Cys-1100, Cys-1094/Cys-1109, Cys-1118/Cys-1130, Cys-1125/Cys-1143, Cys-1137/Cys-1152, Cys-1158/Cys-1170, Cys-1165/Cys-1183, Cys-1177/Cys-1193, Cys-1198/Cys-1210, Cys-1205/Cys-1223, and Cys-1217/Cys-1232. N-linked (GlcNAc...) asparagine glycosylation occurs at Asn-1240. LDL-receptor class A domains lie at 1242 to 1280 (SCAE…ADCG) and 1282 to 1319 (VCSI…LSCE). Cystine bridges form between Cys-1243–Cys-1257, Cys-1250–Cys-1270, Cys-1264–Cys-1279, Cys-1283–Cys-1296, Cys-1290–Cys-1309, and Cys-1303–Cys-1318. A glycan (N-linked (GlcNAc...) asparagine) is linked at Asn-1265. Asn-1326 carries an N-linked (GlcNAc...) asparagine glycan. The 38-residue stretch at 1339-1376 (SCRPHLFDCQDGECVDLSRVCNNFPDCTNGHDEGPKCA) folds into the LDL-receptor class A 13 domain. 5 disulfides stabilise this stretch: Cys-1340-Cys-1352, Cys-1347-Cys-1365, Cys-1359-Cys-1375, Cys-1422-Cys-1432, and Cys-1428-Cys-1441. The EGF-like 3; calcium-binding domain maps to 1418–1453 (DIDECQEQQPCAQLCENTLGGYQCQCHADFMLRQDR). N-linked (GlcNAc...) asparagine glycans are attached at residues Asn-1475 and Asn-1490. LDL-receptor class B repeat units follow at residues 1588–1637 (ARIF…DPHQ) and 1638–1687 (QLLY…YENN). A helical membrane pass occupies residues 1800–1820 (WLMALFVLAAGSLIAGLGYMY). The Cytoplasmic segment spans residues 1821 to 1984 (YQYRQRGHTD…GNDANARFVS (164 aa)). Phosphoserine is present on Ser-1926. Disordered regions lie at residues 1927-1951 (KLHA…RQVP) and 1965-1984 (SAGQ…RFVS). The segment covering 1932–1946 (DGGGAGGDGDGGRGV) has biased composition (gly residues).

This sequence belongs to the LDLR family. As to quaternary structure, interacts with osk (isoform A). As to expression, ovary.

It localises to the cell membrane. The protein localises to the cytoplasm. Its subcellular location is the cell cortex. It is found in the cytoplasmic vesicle. The protein resides in the clathrin-coated vesicle membrane. It localises to the early endosome membrane. The protein localises to the endosome. Its subcellular location is the multivesicular body lumen. Cell surface receptor involved in uptake of vitellogenins (yolk proteins) into developing oocytes by receptor-mediated endocytosis. May also mediate uptake of apolpp/apolipophorins and their incorporation into yolk granules. Along with its ligands, required for maintenance of microtubule plus-end orientation towards the posterior pole of oocytes. Involved in polarized localization of germ plasm components, such as osk mRNA and vas protein, to the oocyte posterior cortex. Receptor-mediated endocytosis of vitellogenin receptor ligands is critical for osk (isoform A) mediated actin reorganization and the anchoring of germ plasm components to the oocyte cortex. The protein is Vitellogenin receptor Yl of Drosophila melanogaster (Fruit fly).